Here is a 69-residue protein sequence, read N- to C-terminus: Conotoxin Eb6.19 (69 aa).

An N-terminal signal peptide occupies residues 1 to 17 (VLIIAVLFLTACQLTTA). A propeptide spanning residues 18–41 (ETYSRGRQKHRARRSTDKNSKWTR) is cleaved from the precursor. Cystine bridges form between Cys-43-Cys-57, Cys-50-Cys-61, and Cys-56-Cys-68.

Belongs to the conotoxin O1 superfamily. In terms of tissue distribution, expressed by the venom duct.

It is found in the secreted. In Conus ebraeus (Hebrew cone), this protein is Conotoxin Eb6.19 (E1).